A 1401-amino-acid chain; its full sequence is Alpha-latrotoxin-Lt1a (1401 aa).

A signal peptide spans 1–20 (MISVGEIMERANHSLVRMRR). Residues 17–20 (RMRR) are furin-like endopeptidase recognition region. Residues 238-257 (VLYALLYGTQTYVSVMFFLL) are helix H8 is the probable transmembrane region of the tetrameric pore inserted in the target cell membrane. Cysteine 413 and cysteine 1066 form a disulfide bridge. ANK repeat units follow at residues 458-489 (LYNAASNPDSAVGFKEFTKLNYDGANIRATFD), 490-521 (HGRTVFHAAAKSGNDKIMFGLTFLAKSTELNQ), 525-554 (KGYTPIHVAADSGNAGIVNLLIQRGVSINS), 559-589 (FLQTPLHLAAQRGFVTTFQRLMESPEININE), 593-622 (DGFTPLHYAIRGGERILEAFLNQISIDVNA), 626-656 (TGLTPFHLAIIKNDWPVASTLLGSKKVDINA), 660-690 (NNITALHYAAILGYLETTKQLINLKEINANV), 695-723 (GLLSALHYAILYKHDDVASFLMRSSNVNV), 729-758 (GGITPLHLAVIQGRKQILSLMFDIGVNIEQ), 762-791 (EKYTPLHLAAMSKYPELIQILLDQGSNFEA), 795-824 (SGATPLHLATFKGKSQAALILLNNEVNWRD), 828-857 (NGQMPIHGAAMTGLLDVAQAIISIDATVVD), 862-891 (NSDTPLNLAAQNSHIDVIKYFIDQGADINT), 895-924 (KGLAPLLAFSKKGNLDMVKYLFDKNANVYI), 928-957 (DGMNFFYYAVQNGHLNIVKYAMSEKDKFEW), 971-1003 (EECAISHFAVCDAVQFDRIEIVKYFVGTLGNFA), 1004-1033 (ICGPLHQAARYGHLDIVKYLVEEEFLSVDG), 1035-1064 (KTDTPLCYASENGHFTVVQYLVSNGAKVNH), 1068-1097 (NGMTAIDKAITKNHLQVVQFLAANGVDFRR), 1101-1131 (RGTTPFLTAVAENALHIAEYLIREKRQDINI), 1137-1166 (DKDTALHLAVYYKNLQMIKLLIKYGIDVTI), and 1170-1199 (YDKTALDIAIDAKFSNIVEYLKTKSGKFRR). A 4C4.1 epitope region spans residues 1026–1032 (EEFLSVD). Positions 1196–1199 (KFRR) are furin-like endopeptidase recognition region. Residues 1200 to 1401 (EYKSSYGERS…SDGILTKKLM (202 aa)) constitute a propeptide that is removed on maturation.

Belongs to the cationic peptide 01 (latrotoxin) family. 03 (alpha-latrotoxin) subfamily. As to quaternary structure, homotetramer in membranes. In terms of processing, processed by furin-like proteases at both the N- and C-termini. As to expression, expressed in venom gland, cephalothorax, and abdomen tissues from both males and females.

It is found in the secreted. Its subcellular location is the target cell membrane. Presynaptic neurotoxin that causes massive release of neurotransmitters from vertebrate (but not invertebrate) nerve terminals and endocrine cells via a complex mechanism involving activation of receptor(s) and toxin insertion into the plasma membrane with subsequent pore formation. Binds to neurexin-1-alpha (NRXN1) in a calcium dependent manner, adhesion G protein-coupled receptor L1 (ADGRL1, also termed latrophilin-1 and calcium-independent receptor of latrotoxin (CIRL)), and receptor-type tyrosine-protein phosphatase S (PTPRS), also termed PTP sigma. NRXN1 and PTPRS are suggested to provide a platform for binding and subsequent pore formation events. In contrast, binding to ADGRL1 does not involve oligomerization and channel formation, but direct downstream stimulation of the synaptic fusion machinery. The chain is Alpha-latrotoxin-Lt1a from Latrodectus tredecimguttatus (Mediterranean black widow spider).